We begin with the raw amino-acid sequence, 202 residues long: Acireductone dioxygenase (202 aa).

Residues H110, H112, E116, and H154 each coordinate Fe(2+). Residues H110, H112, E116, and H154 each contribute to the Ni(2+) site.

The protein belongs to the acireductone dioxygenase (ARD) family. In terms of assembly, monomer. The cofactor is Fe(2+). Ni(2+) serves as cofactor.

It catalyses the reaction 1,2-dihydroxy-5-(methylsulfanyl)pent-1-en-3-one + O2 = 3-(methylsulfanyl)propanoate + CO + formate + 2 H(+). The catalysed reaction is 1,2-dihydroxy-5-(methylsulfanyl)pent-1-en-3-one + O2 = 4-methylsulfanyl-2-oxobutanoate + formate + 2 H(+). Its pathway is amino-acid biosynthesis; L-methionine biosynthesis via salvage pathway; L-methionine from S-methyl-5-thio-alpha-D-ribose 1-phosphate: step 5/6. In terms of biological role, catalyzes 2 different reactions between oxygen and the acireductone 1,2-dihydroxy-3-keto-5-methylthiopentene (DHK-MTPene) depending upon the metal bound in the active site. Fe-containing acireductone dioxygenase (Fe-ARD) produces formate and 2-keto-4-methylthiobutyrate (KMTB), the alpha-ketoacid precursor of methionine in the methionine recycle pathway. Ni-containing acireductone dioxygenase (Ni-ARD) produces methylthiopropionate, carbon monoxide and formate, and does not lie on the methionine recycle pathway. This Synechococcus sp. (strain CC9311) protein is Acireductone dioxygenase.